Consider the following 602-residue polypeptide: Putative ankyrin repeat protein L100 (602 aa).

11 ANK repeats span residues 133–162, 269–294, 295–324, 325–354, 355–384, 386–414, 416–444, 445–474, 476–504, 506–534, and 536–566; these read VLFYLLKTNLNENRLRIVEHIFKNPSSLIS, YLEKIFSLSCKYHDSRIAEILIKKSI, NKERCLISACEAGFLEIVECLVKQDVNINL, LKGTPLVTACQFGHLLIVDFLVNNSADIHI, RDNAPILYACRYGHVDIVDYLIGKGIDIHT, SSQALINACNRGHLNVMELLVEKGADIRS, ENILVVEACRNTNADILRFLVRIGVDVLS, KGVEPLIVACERGQLAIVQYLIDIGIDICA, DNEALIKSCRSGFANIVNLLIENGADVKA, DNEALIIACEKCNHTIVTILVSNGADITA, and NNEALIRACHNEAVGKYFIDFLIEKGADVHA.

This Acanthamoeba polyphaga mimivirus (APMV) protein is Putative ankyrin repeat protein L100.